Consider the following 184-residue polypeptide: Uroplakin-2 (184 aa).

Residues 1-25 (MASPLPVRTLPLILILLAVLAPGAS) form the signal peptide. Positions 26–84 (DFNISSLSGPLSPALTESLLVALPPCHLTGGNATLMVRRANDSKVVKSSFMVPPCRGRR) are excised as a propeptide. Residues Asn28, Asn57, and Asn66 are each glycosylated (N-linked (GlcNAc...) asparagine). At 85–155 (ELVSVVDSGS…IGLGMARTGG (71 aa)) the chain is on the lumenal side. Residues 156–180 (MVVITVLLSVAMFLLVVGFITALAL) form a helical membrane-spanning segment. Topologically, residues 181–184 (GARK) are cytoplasmic.

Belongs to the uroplakin-2 family. In terms of assembly, interacts with uroplakin-1a (UPK1A). In terms of tissue distribution, expressed only in the urothelium. Localizes to urothelial superficial cells.

The protein resides in the cell membrane. Its function is as follows. Component of the asymmetric unit membrane (AUM); a highly specialized biomembrane elaborated by terminally differentiated urothelial cells. May play an important role in regulating the assembly of the AUM. The sequence is that of Uroplakin-2 (UPK2) from Sus scrofa (Pig).